The following is a 1027-amino-acid chain: A-factor-processing enzyme (1027 aa).

H118 contacts Zn(2+). E121 functions as the Proton acceptor in the catalytic mechanism. The Zn(2+) site is built by H122 and E199.

The protein belongs to the peptidase M16 family. Requires Zn(2+) as cofactor.

Its subcellular location is the membrane. Inhibited by chelating agents like EDTA, TPEN and 1,1-phenanthroline, as well as NEM, free cysteine and DTT. Involved in the N-terminal endoproteolytic cleavage of the P2 precursor of the a-factor mating pheromone. Capable of proteolysing the established mammalian insulin-degrading enzymes (IDEs) substrates amyloid-beta peptide and insulin B-chain. This chain is A-factor-processing enzyme (STE23), found in Saccharomyces cerevisiae (strain ATCC 204508 / S288c) (Baker's yeast).